Here is a 94-residue protein sequence, read N- to C-terminus: DASH complex subunit dad2 (94 aa).

Positions Lys-18 to Glu-38 form a coiled coil. The disordered stretch occupies residues Val-72–Val-94. Positions Pro-76–Glu-87 are enriched in polar residues.

It belongs to the DASH complex DAD2 family. In terms of assembly, component of the DASH complex consisting of ask1, dad1, dad2, dad3, dad4, dam1, duo1, dad5, spc19 and spc34, with a stoichiometry of one copy of each subunit per complex. Multiple DASH complexes oligomerize to form a ring that encircles spindle microtubules and organizes the rod-like NDC80 complexes of the outer kinetochore. DASH complex oligomerization strengthens microtubule attachments. On cytoplasmic microtubules, DASH complexes appear to form patches instead of rings.

The protein localises to the nucleus. The protein resides in the cytoplasm. It localises to the cytoskeleton. It is found in the spindle. Its subcellular location is the chromosome. The protein localises to the centromere. The protein resides in the kinetochore. Its function is as follows. Component of the DASH complex that connects microtubules with kinetochores and couples microtubule depolymerisation to chromosome movement; it is involved in retrieving kinetochores to the spindle poles before their re-orientation on the spindle in early mitosis and allows microtubule depolymerization to pull chromosomes apart and resist detachment during anaphase. Kinetochores, consisting of a centromere-associated inner segment and a microtubule-contacting outer segment, play a crucial role in chromosome segregation by mediating the physical connection between centromeric DNA and microtubules. Kinetochores also serve as an input point for the spindle assembly checkpoint, which delays anaphase until all chromosomes have bioriented on the mitotic spindle. The DASH complex mediates bipolar kinetochore-microtubule attachments and facilitates the formation of additional interactions between outer kinetochore components and spindle microtubules. During chromosome movement along the microtubule, it is required both for the sliding of kinetochores along the lateral side of the microtubule and also for microtubule end-on pulling on the kinetochore. Modulates cytoplasmic microtubule dynamics by tracking the plus-end of shortening microtubules and slowing their depolymerization. This Schizosaccharomyces pombe (strain 972 / ATCC 24843) (Fission yeast) protein is DASH complex subunit dad2.